Reading from the N-terminus, the 309-residue chain is Heme-dependent oxidative N-demethylase beta subunit (309 aa).

One can recognise an FAD-binding FR-type domain in the interval 2-103; sequence STLLDVRVAA…SPPANLFPLH (102 aa). The 2Fe-2S ferredoxin-type domain occupies 226–309; sequence FRVELARSGQ…GCGSPILLDL (84 aa). 4 residues coordinate [2Fe-2S] cluster: Cys-260, Cys-265, Cys-268, and Cys-296.

Belongs to the PDR/VanB family. As to quaternary structure, the heme-dependent oxidative N-demethylase (HODM) is a heterotetramer composed of a catalytic alpha subunit, a FMN/2Fe-2S-dependent oxidoreductase beta subunit, a gamma subunit with putative aminotransferase activity, and a delta subunit of unknown function. [2Fe-2S] cluster is required as a cofactor. FMN serves as cofactor.

Functionally, component of the heme-dependent oxidative N-demethylase (HODM) enzyme, that catalyzes the NADPH-dependent oxidation of dimethylamine (DMA) to methylamine (MA) and formaldehyde. Functions in bacterial methylated amine catabolism, linking alkylamine oxidation to the tetrahydrofolate C1 pool. The beta subunit of HODM binds FMN and a 2Fe-2S cluster, and likely reduces the ferric heme iron of the alpha subunit to ferrous using NADPH. The polypeptide is Heme-dependent oxidative N-demethylase beta subunit (Ectopseudomonas mendocina (strain ymp) (Pseudomonas mendocina)).